The primary structure comprises 495 residues: B3 domain-containing protein Os01g0234100 (495 aa).

2 disordered regions span residues 1–25 (MAIDQPIKKRGRPPGSKNTKNKMEQ) and 88–108 (PGIPQTCNTQNTSNGRTNTTE). Positions 92-108 (QTCNTQNTSNGRTNTTE) are enriched in polar residues. A DNA-binding region (TF-B3) is located at residues 152 to 243 (FVKHMLHSHV…KFKVHIIRDK (92 aa)). The segment covering 268–282 (EATDNATKPKEDPET) has biased composition (basic and acidic residues). The tract at residues 268-289 (EATDNATKPKEDPETTRVSSKV) is disordered.

It localises to the nucleus. This chain is B3 domain-containing protein Os01g0234100, found in Oryza sativa subsp. japonica (Rice).